Reading from the N-terminus, the 1408-residue chain is Protein patched homolog 1 (1408 aa).

The segment at 1-20 is disordered; the sequence is MLTLLEPPGAKRSPTVGNYN. At 1 to 136 the chain is on the cytoplasmic side; that stretch reads MLTLLEPPGA…GNTVHRNAWS (136 aa). Residues 137–157 traverse the membrane as a helical segment; sequence IILAVSMIFAVCCYGLQYVHI. The Extracellular segment spans residues 158–649; the sequence is ETDIVKLWVA…STSIADMLEE (492 aa). The disordered stretch occupies residues 455-479; it reads STAPIPTTTTLSPEEARAAEEKEKK. A compositionally biased stretch (basic and acidic residues) spans 468–479; that stretch reads EEARAAEEKEKK. N-linked (GlcNAc...) asparagine glycosylation is present at N599. A helical membrane pass occupies residues 650–670; that stretch reads FCQFNYTIILAGYALMLAYAI. In terms of domain architecture, SSD spans 654–816; the sequence is NYTIILAGYA…LTIYPAIISI (163 aa). Residues 671–686 lie on the Cytoplasmic side of the membrane; that stretch reads VTQARFDNCLPATESS. A helical transmembrane segment spans residues 687 to 707; that stretch reads MGLALAGVLVVTFASVAGLGL. The Extracellular segment spans residues 708–709; sequence AT. The chain crosses the membrane as a helical span at residues 710–730; that stretch reads WFGIEFNAATTQIVPFLTLGI. Residues 731-765 are Cytoplasmic-facing; sequence GVDNMFMLLHNYRDVVKLAGGHAEMAILMRETGMS. The helical transmembrane segment at 766 to 786 threads the bilayer; that stretch reads ILCTSINNILSFLTGTLLPIP. The Extracellular segment spans residues 787 to 795; sequence ALRSFCAQS. A helical transmembrane segment spans residues 796–816; sequence SILLTFNFIAILTIYPAIISI. The Cytoplasmic portion of the chain corresponds to 817–901; that stretch reads DLRRKKAQRR…YYYIPFISKP (85 aa). The helical transmembrane segment at 902 to 922 threads the bilayer; that stretch reads ASKVAIIVGCCALLGASFIGM. Topologically, residues 923-1175 are extracellular; the sequence is RQSTLGLELG…QGIAFTFWEQ (253 aa). N-linked (GlcNAc...) asparagine glycans are attached at residues N1026 and N1036. A helical membrane pass occupies residues 1176–1196; it reads YLFLTGNLMQAISIITISVFC. The Cytoplasmic portion of the chain corresponds to 1197–1217; it reads VISVLLFNPWAALMVVCILGI. Transmembrane regions (helical) follow at residues 1218-1238 and 1239-1259; these read MTCELAGFMGLVGIKLNPVSA and VTLITAVGIGVEFTVHVVVSF. Over 1260-1276 the chain is Extracellular; it reads LTALGTRSQRTSSAVDR. Residues 1277–1297 traverse the membrane as a helical segment; the sequence is VFVPVIHGSFSTLLGILMLGF. The Cytoplasmic portion of the chain corresponds to 1298–1305; the sequence is SEFEFVVK. Residues 1306-1326 traverse the membrane as a helical segment; it reads YFFIVMTALICIGIINGLILL. The Extracellular segment spans residues 1327–1408; that stretch reads PVLLSWFGPR…GNNTRRLPAV (82 aa). The tract at residues 1342 to 1408 is disordered; the sequence is TGGKTTLTLP…GNNTRRLPAV (67 aa). Positions 1387 to 1408 are enriched in low complexity; it reads TTRTSGGNRGTVGNNTRRLPAV.

It belongs to the patched family. Germ line and its progenitors.

It is found in the membrane. Required but not essential for cytokinesis of mitotically proliferating germ cells. This is Protein patched homolog 1 (ptc-1) from Caenorhabditis elegans.